The primary structure comprises 810 residues: Nuclear pore complex protein NUP88 (810 aa).

A disordered region spans residues 1 to 23 (MKFNFNETEDAPDSRRSPTPKEP). Residues 646 to 748 (APNLKRIIDD…RARVKKSTQK (103 aa)) adopt a coiled-coil conformation.

In terms of assembly, part of the nuclear pore complex (NPC). The NPC has an eight-fold symmetrical structure comprising a central transport channel and two rings, the cytoplasmic and nuclear rings, to which eight filaments are attached. The cytoplasmic filaments have loose ends, while the nuclear filaments are joined in a distal ring, forming a nuclear basket. NPCs are highly dynamic in configuration and composition, and can be devided in 3 subcomplexes, the NUP62 subcomplex, the NUP107-160 subcomplex and the NUP93 subcomplex, containing approximately 30 different nucleoporin proteins.

It is found in the nucleus envelope. The protein resides in the nucleus. It localises to the nuclear pore complex. Functionally, involved in the regulation of exportin-mediated nuclear protein export. Required for resistance mediated by multiple R proteins and for the appropriate nuclear accumulation of SNC1 and of the downstream defense signaling components EDS1 and NPR1. Not involved in salt tolerance, ethylene and auxin responses, but required for systemic acquired resistance. This is Nuclear pore complex protein NUP88 from Arabidopsis thaliana (Mouse-ear cress).